A 521-amino-acid polypeptide reads, in one-letter code: Replicase polyprotein 1ab (521 aa).

The AV-Nsp11N/CoV-Nsp15M domain occupies 1–58 (GGGGQSFLAADNAVLVSTQCYKRHSYVEIPSNLLVQNGMSLKDGANLYVYKRVNGAFV). The region spanning 75–216 (EPRSDVERDF…EDGSIKTCYP (142 aa)) is the NendoU domain. Catalysis depends on residues His104, His119, Lys159, Lys263, Asp347, Lys391, and Glu424. The Nidovirus-type SAM-dependent 2'-O-MTase domain maps to 219–518 (QSAWTCGYNM…NTSFTSDSFV (300 aa)).

The replicase polyprotein of coronaviruses is a multifunctional protein: it contains the activities necessary for the transcription of negative stranded RNA, leader RNA, subgenomic mRNAs and progeny virion RNA as well as proteinases responsible for the cleavage of the polyprotein into functional products. Functionally, nendoU is a Mn(2+)-dependent, uridylate-specific enzyme, which leaves 2'-3'-cyclic phosphates 5' to the cleaved bond. This chain is Replicase polyprotein 1ab (rep), found in Gallus gallus (Chicken).